We begin with the raw amino-acid sequence, 135 residues long: Small ribosomal subunit protein uS9 (135 aa).

Over residues P102 to A115 the composition is skewed to basic and acidic residues. A disordered region spans residues P102–R135. The span at K116–R135 shows a compositional bias: basic residues.

It belongs to the universal ribosomal protein uS9 family.

In Synechococcus sp. (strain CC9311), this protein is Small ribosomal subunit protein uS9.